A 382-amino-acid polypeptide reads, in one-letter code: Alanine racemase (382 aa).

Lysine 39 acts as the Proton acceptor; specific for D-alanine in catalysis. At lysine 39 the chain carries N6-(pyridoxal phosphate)lysine. Residue arginine 138 participates in substrate binding. The active-site Proton acceptor; specific for L-alanine is tyrosine 265. Substrate is bound at residue methionine 312.

Belongs to the alanine racemase family. Requires pyridoxal 5'-phosphate as cofactor.

It carries out the reaction L-alanine = D-alanine. It participates in amino-acid biosynthesis; D-alanine biosynthesis; D-alanine from L-alanine: step 1/1. Its function is as follows. Catalyzes the interconversion of L-alanine and D-alanine. May also act on other amino acids. The sequence is that of Alanine racemase (alr) from Staphylococcus epidermidis (strain ATCC 35984 / DSM 28319 / BCRC 17069 / CCUG 31568 / BM 3577 / RP62A).